Here is a 393-residue protein sequence, read N- to C-terminus: tRNA(Met) cytidine acetate ligase (393 aa).

Residues Gly-81, Asn-142, and Arg-167 each coordinate ATP.

It belongs to the TmcAL family.

The protein localises to the cytoplasm. It catalyses the reaction cytidine(34) in elongator tRNA(Met) + acetate + ATP = N(4)-acetylcytidine(34) in elongator tRNA(Met) + AMP + diphosphate. Its function is as follows. Catalyzes the formation of N(4)-acetylcytidine (ac(4)C) at the wobble position of elongator tRNA(Met), using acetate and ATP as substrates. First activates an acetate ion to form acetyladenylate (Ac-AMP) and then transfers the acetyl group to tRNA to form ac(4)C34. The chain is tRNA(Met) cytidine acetate ligase from Bacillus cereus (strain AH820).